Here is a 373-residue protein sequence, read N- to C-terminus: C-C chemokine receptor type 2 (373 aa).

At 1-55 (MEDNNMLPQFIHGILSTSHSLFTRSIQELDEGATTPYDYDDGEPCHKTSVKQIGA) the chain is on the extracellular side. The helical transmembrane segment at 56–83 (WILPPLYSLVFIFGFVGNMLVIIILIGC) threads the bilayer. Residues 84 to 93 (KKLKSMTDIY) lie on the Cytoplasmic side of the membrane. Residues 94–114 (LLNLAISDLLFLLTLPFWAHY) traverse the membrane as a helical segment. The Extracellular segment spans residues 115 to 127 (AANEWVFGNIMCK). An intrachain disulfide couples C126 to C203. The chain crosses the membrane as a helical span at residues 128-149 (VFTGLYHIGYFGGIFFIILLTI). Residues 150 to 166 (DRYLAIVHAVFALKART) are Cytoplasmic-facing. Phosphotyrosine; by JAK2 is present on Y152. Residues 167 to 191 (VTFGVITSVVTWVVAVFASLPGIIF) form a helical membrane-spanning segment. Residues 192–219 (TKSKQDDHHYTCGPYFTQLWKNFQTIMR) lie on the Extracellular side of the membrane. Residues 220–239 (NILSLILPLLVMVICYSGIL) form a helical membrane-spanning segment. The Cytoplasmic portion of the chain corresponds to 240-256 (HTLFRCRNEKKRHRAVR). Residues 257-281 (LIFAIMIVYFLFWTPYNIVLFLTTF) traverse the membrane as a helical segment. Topologically, residues 282-298 (QESLGMSNCVIDKHLDQ) are extracellular. A helical membrane pass occupies residues 299–322 (AMQVTETLGMTHCCINPVIYAFVG). The Cytoplasmic segment spans residues 323–373 (EKFRRYLSIFFRKHIAKRLCKQCPVFYRETADRVSSTFTPSTGEQEVSVGL).

This sequence belongs to the G-protein coupled receptor 1 family. Interacts with ARRB1. Interacts (via extracellular N-terminal region) with beta-defensin DEFB106A/DEFB106B; this interaction may preferentially require specific tyrosine sulfation on CCR2. Interacts with NUP85; the interaction is required for CCR2 clusters formation on the cell membrane and CCR2 signaling. N-glycosylated. Post-translationally, sulfation increases the affinity for both monomeric and dimeric CCL2 with stronger binding to the monomeric form. Binding of sulfated CCR2 to CCL2 promotes conversion of CCL2 from dimer to monomer. In terms of tissue distribution, epressed in mature thymocytes. Detected in monocyte/macrophage cell lines, but not in nonhematopoietic cell lines.

It localises to the cell membrane. Functionally, key functional receptor for CCL2 but can also bind CCL7 and CCL12 chemokines. Its binding with CCL2 on monocytes and macrophages mediates chemotaxis and migration induction through the activation of the PI3K cascade, the small G protein Rac and lamellipodium protrusion. Also acts as a receptor for the beta-defensin DEFB106A/DEFB106B. Regulates the expression of T-cell inflammatory cytokines and T-cell differentiation, promoting the differentiation of T-cells into T-helper 17 cells (Th17) during inflammation. Facilitates the export of mature thymocytes by enhancing directional movement of thymocytes to sphingosine-1-phosphate stimulation and up-regulation of S1P1R expression; signals through the JAK-STAT pathway to regulate FOXO1 activity leading to an increased expression of S1P1R. Plays an important role in mediating peripheral nerve injury-induced neuropathic pain. Increases NMDA-mediated synaptic transmission in both dopamine D1 and D2 receptor-containing neurons, which may be caused by MAPK/ERK-dependent phosphorylation of GRIN2B/NMDAR2B. Mediates the recruitment of macrophages and monocytes to the injury site following brain injury. This Mus musculus (Mouse) protein is C-C chemokine receptor type 2 (Ccr2).